Here is a 616-residue protein sequence, read N- to C-terminus: Endonuclease 8-like 3 (616 aa).

An FPG-type zinc finger spans residues 271-305 (KVYKRPNCGQCGTKITVCRLGEHNRMTYFCPKCQK). A RanBP2-type zinc finger spans residues 341 to 370 (KEEHWACAVCTLINKPSDKQCDACLTLRPE). Residues 491 to 524 (LKTGHTTSNTIHLSSTISSPQSKMTGDAAAKTGN) are disordered. A compositionally biased stretch (polar residues) spans 494 to 514 (GHTTSNTIHLSSTISSPQSKM). Zn(2+)-binding residues include Cys-527, His-530, Cys-553, Cys-561, Cys-574, His-576, Cys-599, and Cys-607. GRF-type zinc fingers lie at residues 527 to 570 (CSAH…ADLH) and 574 to 616 (CNHG…AKTE).

The protein belongs to the FPG family.

The protein localises to the nucleus. Its subcellular location is the chromosome. It catalyses the reaction 2'-deoxyribonucleotide-(2'-deoxyribose 5'-phosphate)-2'-deoxyribonucleotide-DNA = a 3'-end 2'-deoxyribonucleotide-(2,3-dehydro-2,3-deoxyribose 5'-phosphate)-DNA + a 5'-end 5'-phospho-2'-deoxyribonucleoside-DNA + H(+). Its function is as follows. DNA glycosylase which prefers single-stranded DNA (ssDNA), or partially ssDNA structures such as bubble and fork structures, to double-stranded DNA (dsDNA). Mediates interstrand cross-link repair in response to replication stress: recruited to replication stress sites via interaction with ubiquitinated CMG helicase and acts by mediating DNA glycosylase activity. Cleaves one of the two N-glycosyl bonds comprising the interstrand cross-link, which avoids the formation of a double-strand break but generates an abasic site that is bypassed by translesion synthesis polymerases. This is Endonuclease 8-like 3 from Xenopus laevis (African clawed frog).